Reading from the N-terminus, the 110-residue chain is Acylphosphatase (110 aa).

An Acylphosphatase-like domain is found at Thr21–Gly108. Active-site residues include Arg36 and Asn54.

The protein belongs to the acylphosphatase family.

The catalysed reaction is an acyl phosphate + H2O = a carboxylate + phosphate + H(+). The protein is Acylphosphatase (acyP) of Koribacter versatilis (strain Ellin345).